The primary structure comprises 376 residues: Arf-GAP with dual PH domain-containing protein 2 (376 aa).

Residues 9–130 (KRLLELLQAA…EFMAEKAVSP (122 aa)) form the Arf-GAP domain. The C4-type zinc-finger motif lies at 25 to 48 (CADCGAADPDWASYKLGVFICLHC). 2 PH domains span residues 131 to 232 (PGDR…AARL) and 254 to 360 (NYLK…GVLS).

As to expression, expressed in many tissues, with highest levels in fat, heart and skeletal muscle. Also detected in kidney, liver and lung.

Its subcellular location is the cytoplasm. The protein resides in the cell membrane. Its function is as follows. GTPase-activating protein for the ADP ribosylation factor family (Potential). Binds phosphatidylinositol 4,5-bisphosphate, phosphatidylinositol 3,4,5-trisphosphate (PtdInsP3) and inositol 1,3,4,5-tetrakisphosphate (InsP4). Binding of phosphatidylinositol 3,5-bisphosphate and phosphatidylinositol 3,4-bisphosphate occurs at a much lower affinity. Possesses a stoichiometry of two binding sites for InsP4 with identical affinity. In Rattus norvegicus (Rat), this protein is Arf-GAP with dual PH domain-containing protein 2 (Adap2).